The following is a 289-amino-acid chain: MSGFSSEERAAPFTLEYRVFLKNEKGQYISPFHDVPIYADKDVFHMVVEVPRWSNAKMEIATKDPLNPIKQDVKKGKLRYVANLFPYKGYIWNYGAIPQTWEDPGHSDKHTGCCGDNDPIDVCEIGSKVCARGEIIRVKVLGILAMIDEGETDWKVIAINVDDPDAANYKDISDVERLKPGYLEATVDWFRRYKVPDGKPENEFAFNAEFKNKDFAVDIIKSTHDYWKALVTKKTDGKGISCMNTTVSESPFKCDPDAAKAIVDALPPPCESACSLPTDVDKWFHQQKN.

Ser-2 carries the post-translational modification N-acetylserine. Lys-57 carries the N6-acetyllysine modification. Residues Asp-116, Asp-121, and Asp-153 each contribute to the Mg(2+) site. The residue at position 228 (Lys-228) is an N6-acetyllysine. Ser-250 carries the post-translational modification Phosphoserine.

Belongs to the PPase family. Homodimer. Mg(2+) serves as cofactor.

The protein resides in the cytoplasm. It catalyses the reaction diphosphate + H2O = 2 phosphate + H(+). This chain is Inorganic pyrophosphatase (Ppa1), found in Mus musculus (Mouse).